Here is a 260-residue protein sequence, read N- to C-terminus: Tetraspanin-14 (260 aa).

Residues 1–10 (MKSQSHKPWN) are Cytoplasmic-facing. The chain crosses the membrane as a helical span at residues 11 to 31 (LVAGIFFPIITFFLSAPLVGH). The Extracellular portion of the chain corresponds to 32–54 (ALYLFCMRNDHVYYRDFQSTLPR). A helical transmembrane segment spans residues 55–75 (VQTLVSVSLLALFLLSNIGMF). Residues 76 to 80 (LRPRR) lie on the Cytoplasmic side of the membrane. The helical transmembrane segment at 81–101 (LSYFLVIVFFIGFAYSGVYKM) threads the bilayer. The Extracellular segment spans residues 102 to 260 (ESRRFSPTPM…FLSSLTSLFR (159 aa)). The N-linked (GlcNAc...) asparagine glycan is linked to Asn-182.

It belongs to the tetraspanin (TM4SF) family.

The protein localises to the membrane. Its function is as follows. May be involved in the regulation of cell differentiation. The polypeptide is Tetraspanin-14 (TET14) (Arabidopsis thaliana (Mouse-ear cress)).